The primary structure comprises 395 residues: Crh-like protein 5 (395 aa).

An N-terminal signal peptide occupies residues 1–19 (MYFKYTAAALAAVLPLCSA). Cys25 and Cys32 are oxidised to a cystine. Residues 45–230 (ADFTSASALD…WAGGLTDYSA (186 aa)) form the GH16 domain. Glu119 acts as the Nucleophile in catalysis. The active-site Proton donor is Glu123. 4 residues coordinate chitin: Glu123, Arg203, Trp207, and Thr218. Residues 271 to 374 (ISSSSSVTSS…PELSQGAAGS (104 aa)) are disordered. Low complexity-rich tracts occupy residues 272 to 338 (SSSS…SNTG) and 348 to 364 (GSSS…ASAT). N-linked (GlcNAc...) asparagine glycosylation occurs at Asn319. The GPI-like-anchor amidated glycine moiety is linked to residue Gly370. Positions 371 to 395 (AAGSIKGSVTACALVFGAVAAVLAF) are cleaved as a propeptide — removed in mature form.

It belongs to the glycosyl hydrolase 16 family. CRH1 subfamily. In terms of processing, the GPI-like anchor contains a phosphoceramide lipid group. The anchor position has not been determined.

It localises to the cell membrane. Its subcellular location is the secreted. The protein resides in the cell wall. It catalyses the reaction Random endo-hydrolysis of N-acetyl-beta-D-glucosaminide (1-&gt;4)-beta-linkages in chitin and chitodextrins.. Its function is as follows. Dual chitinase/transglycosylase that plays a role in cell wall architecture. Chitinase and transglycosylase activities are coupled. Required for the polysaccharide cross-linking at the septa and the cell wall. More specifically, transfers chitin to 1,6-beta-glucan in the cell wall. Chr5 shows acceptor substrate promiscuity and is also able to cross-link chitin to chitin. This chain is Crh-like protein 5, found in Aspergillus fumigatus (strain ATCC MYA-4609 / CBS 101355 / FGSC A1100 / Af293) (Neosartorya fumigata).